Here is a 319-residue protein sequence, read N- to C-terminus: Acetyl-coenzyme A carboxylase carboxyl transferase subunit alpha (319 aa).

The CoA carboxyltransferase C-terminal domain maps to 35-296; sequence NIDEEVHRLR…KAQLLADLAD (262 aa).

Belongs to the AccA family. As to quaternary structure, acetyl-CoA carboxylase is a heterohexamer composed of biotin carboxyl carrier protein (AccB), biotin carboxylase (AccC) and two subunits each of ACCase subunit alpha (AccA) and ACCase subunit beta (AccD).

The protein localises to the cytoplasm. It catalyses the reaction N(6)-carboxybiotinyl-L-lysyl-[protein] + acetyl-CoA = N(6)-biotinyl-L-lysyl-[protein] + malonyl-CoA. Its pathway is lipid metabolism; malonyl-CoA biosynthesis; malonyl-CoA from acetyl-CoA: step 1/1. In terms of biological role, component of the acetyl coenzyme A carboxylase (ACC) complex. First, biotin carboxylase catalyzes the carboxylation of biotin on its carrier protein (BCCP) and then the CO(2) group is transferred by the carboxyltransferase to acetyl-CoA to form malonyl-CoA. In Citrobacter koseri (strain ATCC BAA-895 / CDC 4225-83 / SGSC4696), this protein is Acetyl-coenzyme A carboxylase carboxyl transferase subunit alpha.